The sequence spans 106 residues: Nucleoid-associated protein PD_1058 (106 aa).

Belongs to the YbaB/EbfC family. Homodimer.

Its subcellular location is the cytoplasm. It localises to the nucleoid. Functionally, binds to DNA and alters its conformation. May be involved in regulation of gene expression, nucleoid organization and DNA protection. The chain is Nucleoid-associated protein PD_1058 from Xylella fastidiosa (strain Temecula1 / ATCC 700964).